Consider the following 472-residue polypeptide: Glutamate--tRNA ligase (472 aa).

The 'HIGH' region signature appears at 9–19; it reads PSPTGPLHIGS. Residues 237–241 carry the 'KMSKS' region motif; it reads KLSKR. ATP is bound at residue Lys240.

It belongs to the class-I aminoacyl-tRNA synthetase family. Glutamate--tRNA ligase type 1 subfamily. In terms of assembly, monomer.

It is found in the cytoplasm. It carries out the reaction tRNA(Glu) + L-glutamate + ATP = L-glutamyl-tRNA(Glu) + AMP + diphosphate. Functionally, catalyzes the attachment of glutamate to tRNA(Glu) in a two-step reaction: glutamate is first activated by ATP to form Glu-AMP and then transferred to the acceptor end of tRNA(Glu). In Buchnera aphidicola subsp. Baizongia pistaciae (strain Bp), this protein is Glutamate--tRNA ligase.